We begin with the raw amino-acid sequence, 265 residues long: Dimethylsulfide dehydrogenase subunit gamma (265 aa).

The signal sequence occupies residues 1 to 25 (MPGFRFLLAATAAFLATSPALPLSA). Histidine 81 and methionine 147 together coordinate heme b.

Heterotrimer of alpha, beta and gamma subunits. Heme b is required as a cofactor.

It is found in the periplasm. May transfer electrons to the iron-sulfur centers of DdhB. The protein is Dimethylsulfide dehydrogenase subunit gamma (ddhC) of Rhodovulum sulfidophilum (Rhodobacter sulfidophilus).